We begin with the raw amino-acid sequence, 581 residues long: Interleukin-22 receptor subunit alpha-1 (581 aa).

An N-terminal signal peptide occupies residues 1–15; it reads MKTLLTILTVGSLAA. The Extracellular segment spans residues 16–230; that stretch reads HTTVDTSGLL…TLPDRTWAYS (215 aa). Fibronectin type-III domains lie at 18 to 115 and 141 to 221; these read TVDT…RFSS and PTLT…RVKT. C71 and C79 are joined by a disulfide. N-linked (GlcNAc...) asparagine glycans are attached at residues N80 and N172. Cysteines 128 and 217 form a disulfide. Residues 231–251 traverse the membrane as a helical segment; it reads FSGAVLFSMGFLVGLLCYLGY. At 252-581 the chain is on the cytoplasmic side; sequence KYITKPPVPP…GLALTVQWES (330 aa). Positions 343–364 are disordered; sequence QQTLSPPSYAPKAVPEVQPPSY. Residues S410 and S414 each carry the phosphoserine; by GSK3-beta modification. Residue K449 forms a Glycyl lysine isopeptide (Lys-Gly) (interchain with G-Cter in ubiquitin) linkage.

Belongs to the type II cytokine receptor family. Heterodimer with IL10RB and with IL20RB. Post-translationally, phosphorylated by GSK3-BETA and MAPK; phosphorylation by GSK3-BETA stabilizes IL22RA1 by preventing its proteasomal degradation. As to expression, expressed in kidney, liver and lung.

The protein localises to the cell membrane. Its function is as follows. Component of the receptor for IL20, IL22 and IL24. Component of IL22 receptor formed by IL22RA1 and IL10RB enabling IL22 signaling via JAK/STAT pathways. IL22 also induces activation of MAPK1/MAPK3 and Akt kinases pathways. Component of one of the receptor for IL20 and IL24 formed by IL22RA1 and IL20RB also signaling through STATs activation. Mediates IL24 antiangiogenic activity as well as IL24 inhibitory effect on endothelial cell tube formation and differentiation. The sequence is that of Interleukin-22 receptor subunit alpha-1 (Il22ra1) from Mus musculus (Mouse).